The primary structure comprises 261 residues: MKVALGIEYDGSNYFGWQRQAEVVSVQQTLEEALSKVTNTTIEVFCAGRTDSGVHGTGQVVHFDTEVERPLASWCFGTNAHLANDIAVKWAVKVAEDFHARFSATARRYRYIIFNSKLRTAILPKGVAHYHYPLDAQKMHQAGQYLLGEQDFSSFRAAKCQSHTPWRNIHHLNVVRQGNYVIVDIQANAFVHHMVRNIVGSLLEVGQGRQPIEWIKWLLEQKNRQLAAPTTKAEGLYLVNVEYPSRFGIPKTALGPLFLAD.

Catalysis depends on aspartate 51, which acts as the Nucleophile. Tyrosine 109 contributes to the substrate binding site.

This sequence belongs to the tRNA pseudouridine synthase TruA family. Homodimer.

It carries out the reaction uridine(38/39/40) in tRNA = pseudouridine(38/39/40) in tRNA. In terms of biological role, formation of pseudouridine at positions 38, 39 and 40 in the anticodon stem and loop of transfer RNAs. This chain is tRNA pseudouridine synthase A, found in Haemophilus ducreyi (strain 35000HP / ATCC 700724).